A 340-amino-acid chain; its full sequence is NADH-quinone oxidoreductase subunit H (340 aa).

The next 8 helical transmembrane spans lie at 4-24 (TIGI…PLLI), 78-98 (YLFV…WAVI), 113-133 (VLYL…AGWA), 151-171 (VSYE…AGSM), 184-204 (MLHW…ISGI), 244-264 (SMIL…LSPF), 273-293 (IFFI…FLFV), and 316-336 (VLIP…VAHV).

The protein belongs to the complex I subunit 1 family. In terms of assembly, NDH-1 is composed of 14 different subunits. Subunits NuoA, H, J, K, L, M, N constitute the membrane sector of the complex.

Its subcellular location is the cell inner membrane. It catalyses the reaction a quinone + NADH + 5 H(+)(in) = a quinol + NAD(+) + 4 H(+)(out). Its function is as follows. NDH-1 shuttles electrons from NADH, via FMN and iron-sulfur (Fe-S) centers, to quinones in the respiratory chain. The immediate electron acceptor for the enzyme in this species is believed to be ubiquinone. Couples the redox reaction to proton translocation (for every two electrons transferred, four hydrogen ions are translocated across the cytoplasmic membrane), and thus conserves the redox energy in a proton gradient. This subunit may bind ubiquinone. The protein is NADH-quinone oxidoreductase subunit H of Legionella pneumophila subsp. pneumophila (strain Philadelphia 1 / ATCC 33152 / DSM 7513).